Here is a 72-residue protein sequence, read N- to C-terminus: Translation initiation factor IF-1 (72 aa).

One can recognise an S1-like domain in the interval 1-72; that stretch reads MSKEDSFEME…SKGRITYRAR (72 aa).

It belongs to the IF-1 family. In terms of assembly, component of the 30S ribosomal translation pre-initiation complex which assembles on the 30S ribosome in the order IF-2 and IF-3, IF-1 and N-formylmethionyl-tRNA(fMet); mRNA recruitment can occur at any time during PIC assembly.

The protein localises to the cytoplasm. Its function is as follows. One of the essential components for the initiation of protein synthesis. Stabilizes the binding of IF-2 and IF-3 on the 30S subunit to which N-formylmethionyl-tRNA(fMet) subsequently binds. Helps modulate mRNA selection, yielding the 30S pre-initiation complex (PIC). Upon addition of the 50S ribosomal subunit IF-1, IF-2 and IF-3 are released leaving the mature 70S translation initiation complex. The sequence is that of Translation initiation factor IF-1 from Pseudomonas savastanoi pv. phaseolicola (strain 1448A / Race 6) (Pseudomonas syringae pv. phaseolicola (strain 1448A / Race 6)).